A 261-amino-acid chain; its full sequence is EKC/KEOPS complex subunit BUD32 (261 aa).

The 246-residue stretch at 16–261 (DVDIAPISQG…LRGRKRSMLG (246 aa)) folds into the Protein kinase domain. Residues 22–30 (ISQGAEAIV) and K43 contribute to the ATP site. D161 acts as the Proton acceptor in catalysis. Residues S187 and S189 each carry the phosphoserine; by autocatalysis modification.

The protein belongs to the protein kinase superfamily. BUD32 family. As to quaternary structure, component of the EKC/KEOPS complex composed of at least BUD32, CGI121, GON7, KAE1 and PCC1; the whole complex dimerizes.

The protein resides in the cytoplasm. It localises to the nucleus. It is found in the chromosome. The protein localises to the telomere. It carries out the reaction L-seryl-[protein] + ATP = O-phospho-L-seryl-[protein] + ADP + H(+). The catalysed reaction is L-threonyl-[protein] + ATP = O-phospho-L-threonyl-[protein] + ADP + H(+). Functionally, component of the EKC/KEOPS complex that is required for the formation of a threonylcarbamoyl group on adenosine at position 37 (t(6)A37) in tRNAs that read codons beginning with adenine. The complex is probably involved in the transfer of the threonylcarbamoyl moiety of threonylcarbamoyl-AMP (TC-AMP) to the N6 group of A37. BUD32 has ATPase activity in the context of the EKC/KEOPS complex and likely plays a supporting role to the catalytic subunit KAE1. The EKC/KEOPS complex also promotes both telomere uncapping and telomere elongation. The complex is required for efficient recruitment of transcriptional coactivators. Important for bud site selection. The chain is EKC/KEOPS complex subunit BUD32 (BUD32) from Saccharomyces cerevisiae (strain ATCC 204508 / S288c) (Baker's yeast).